We begin with the raw amino-acid sequence, 753 residues long: Synaptotagmin-like protein 5 (753 aa).

One can recognise a RabBD domain in the interval 7–123 (FINLSFLLDH…IISGEWFLEE (117 aa)). Residues 64–106 (CVHCHKTLGLIFDRGDPCQACSLRVCSECRVTGLDGSWKCTVC) form an FYVE-type zinc finger. Disordered stretches follow at residues 145–279 (RRSP…SREH), 297–359 (LTKS…LNSL), and 380–404 (LASG…VPDA). Ser-147 carries the phosphoserine modification. The span at 150–174 (SEETQNQEQAQQCVDKSDTLSSVRQ) shows a compositional bias: polar residues. Residues 195-206 (TRGEIRTPKPES) show a composition bias toward basic and acidic residues. A compositionally biased stretch (polar residues) spans 214–223 (LDSQNLQSFK). Over residues 224–237 (SASGSDRGSTTSSD) the composition is skewed to low complexity. Positions 249 to 275 (KSSYSNGGIPVTQRSPVPSAHSVTSIN) are enriched in polar residues. Positions 380 to 391 (LASGLSTNSQAG) are enriched in polar residues. C2 domains are found at residues 429–550 (VTGE…DEWF) and 597–717 (KRGK…VDWM).

Binds RAB27A that has been activated by GTP-binding.

It localises to the membrane. May act as Rab effector protein and play a role in vesicle trafficking. Binds phospholipids. The sequence is that of Synaptotagmin-like protein 5 (Sytl5) from Mus musculus (Mouse).